A 245-amino-acid chain; its full sequence is Chymotrypsin B (245 aa).

5 cysteine pairs are disulfide-bonded: C1/C121, C42/C58, C135/C201, C167/C182, and C191/C220. Positions A14–R15 are excised as a propeptide. A Peptidase S1 domain is found at I16 to A243. Residues H57 and D101 each act as charge relay system in the active site. Residue S195 is the Charge relay system of the active site.

It belongs to the peptidase S1 family.

The protein resides in the secreted. It is found in the extracellular space. It carries out the reaction Preferential cleavage: Tyr-|-Xaa, Trp-|-Xaa, Phe-|-Xaa, Leu-|-Xaa.. In Gadus morhua (Atlantic cod), this protein is Chymotrypsin B.